The chain runs to 905 residues: Protein translocase subunit SecA (905 aa).

ATP-binding positions include Q89, 107-111 (GEGKT), and D502. Residues C889, C891, C900, and H901 each coordinate Zn(2+).

It belongs to the SecA family. As to quaternary structure, monomer and homodimer. Part of the essential Sec protein translocation apparatus which comprises SecA, SecYEG and auxiliary proteins SecDF-YajC and YidC. Zn(2+) is required as a cofactor.

It is found in the cell inner membrane. Its subcellular location is the cytoplasm. The enzyme catalyses ATP + H2O + cellular proteinSide 1 = ADP + phosphate + cellular proteinSide 2.. Functionally, part of the Sec protein translocase complex. Interacts with the SecYEG preprotein conducting channel. Has a central role in coupling the hydrolysis of ATP to the transfer of proteins into and across the cell membrane, serving both as a receptor for the preprotein-SecB complex and as an ATP-driven molecular motor driving the stepwise translocation of polypeptide chains across the membrane. This chain is Protein translocase subunit SecA, found in Bartonella tribocorum (strain CIP 105476 / IBS 506).